The primary structure comprises 74 residues: MQIKHLITLFFLVLIVADQCSAFFSLIPSLIGGLVSAIKGGRRKREIAAQIEQYRDLQKREAELEELLDRLPMF.

A signal peptide spans 1-22 (MQIKHLITLFFLVLIVADQCSA). Residue K39 is modified to Lysine amide. A propeptide spanning residues 40 to 74 (GGRRKREIAAQIEQYRDLQKREAELEELLDRLPMF) is cleaved from the precursor.

Belongs to the non-disulfide-bridged peptide (NDBP) superfamily. Short antimicrobial peptide (group 4) family. Expressed by the venom gland.

The protein resides in the secreted. Its function is as follows. Shows anti-inflammatory activities, since it decreases release of pro-inflammatory cytokines, and increases release of anti-inflammatory cytokines. Acts by blocking the Toll-like receptor 4 (TLR4). Also increases MHC-II expression in LPS-stimulated cells. Does not show antibacterial activity on Mycobacterium abscessus subsp. massiliense. Does not show antifungal activity. Has low hemolytic activity on human erythrocyte and low monocyte cytotoxicity. In vivo, does not induce immune cell migration. Helical wheel projections predict an amphipathic peptide with distinct hydrophobic and hydrophilic faces. This chain is Peptide ToAP4, found in Tityus obscurus (Amazonian scorpion).